Here is a 447-residue protein sequence, read N- to C-terminus: N-succinylarginine dihydrolase (447 aa).

Substrate is bound by residues 19-28 (AGLSFGNEAS), Asn-110, and 137-138 (HR). Glu-174 is an active-site residue. Position 212 (Arg-212) interacts with substrate. Residue His-248 is part of the active site. 2 residues coordinate substrate: Asp-250 and Asn-359. Cys-365 serves as the catalytic Nucleophile.

The protein belongs to the succinylarginine dihydrolase family. As to quaternary structure, homodimer.

It catalyses the reaction N(2)-succinyl-L-arginine + 2 H2O + 2 H(+) = N(2)-succinyl-L-ornithine + 2 NH4(+) + CO2. It functions in the pathway amino-acid degradation; L-arginine degradation via AST pathway; L-glutamate and succinate from L-arginine: step 2/5. In terms of biological role, catalyzes the hydrolysis of N(2)-succinylarginine into N(2)-succinylornithine, ammonia and CO(2). The chain is N-succinylarginine dihydrolase from Escherichia coli O17:K52:H18 (strain UMN026 / ExPEC).